We begin with the raw amino-acid sequence, 166 residues long: Small ribosomal subunit protein uS5 (166 aa).

An S5 DRBM domain is found at 12-75 (YIEKLVQVNR…EAARRNMIQV (64 aa)).

It belongs to the universal ribosomal protein uS5 family. In terms of assembly, part of the 30S ribosomal subunit. Contacts proteins S4 and S8.

Functionally, with S4 and S12 plays an important role in translational accuracy. In terms of biological role, located at the back of the 30S subunit body where it stabilizes the conformation of the head with respect to the body. The chain is Small ribosomal subunit protein uS5 from Pseudomonas savastanoi pv. phaseolicola (strain 1448A / Race 6) (Pseudomonas syringae pv. phaseolicola (strain 1448A / Race 6)).